The sequence spans 749 residues: MEENSADIENRPVAAFRPAVSVPMPVLPQDGEVFVGPGGKKDAQKIGLGLSKLSSKRKDDIQMAKKYAMDISIKQILLRQQKQQQENQQRQQMYSQALSIMSRIYVGSISFEIREDMLRRAFDPFGPIKSINMSWDPATGHHKTFAFVEYEVPEAALLAQESMNGQMLGGRNLKVNSMMFQEMRLPQNMPQAQPIIDMVQKDAKKYFRVYVSSVHPDLSETDLKSVFEAFGEIVKCQLARAPTGRGHRGFGYLEFNNLTSQSEAIAGMNMFDLGGQYLRVGKCVTPPDALTYLQPASVSAIPASVSVACAAITAKVMAAEAAAGSSPKTPSESGGSRAASPAPRAQSPATPSSSLPTDIENKAVISSPKKEPEEIEVPPLPPSAPDVVKDEPMEIEEEEEYTIPEEKPKPVAIVPPPGLAIPSLVAPPGLIAPTEIGIVVPNPSFLAQQQQKIEEKIEEEEEARTERVKLSTSQRKKMKREKLNQMTFEEKMAQVLGQQKAVQNQRMADPVTFGALDDTVAWKDPSNEDQTSEDGKMLAIMGPGRGGDNVASMALALMDGGSSLMLANNAKAKEAAAALALEPKKKKKVKEGKKIQPKLNTAQALAAAAKAGEMSDALKNEVMNSEDASLASQEGLEIRGNDARHLLMTKLMRTNRSNVIVLRNMVTPQDIDEFLEGEIREECGKYGNVIDVVIANFASSGLVKIFVKYSDSMQVDRAKAALDGRFFGGNTVKAEAYDQILFDHADYTG.

2 consecutive RRM domains span residues Ser-102–Asn-176 and Phe-207–Thr-285. Disordered regions lie at residues Ala-323–Val-388 and Ile-457–Arg-480. Positions Pro-330–Ser-354 are enriched in low complexity. Residues Asn-658 to Gln-739 enclose the RRM 3; atypical domain.

It belongs to the RRM half pint family.

It localises to the nucleus. In terms of biological role, DNA- and RNA-binding protein, involved in several nuclear processes such as pre-mRNA splicing, apoptosis and transcription regulation. Ensures the correct splicing of genes involved in immunity to promote longevity in response to infection by pathogenic bacteria such as S.aureus. In Caenorhabditis elegans, this protein is Poly(U)-binding-splicing factor rnp-6.